Reading from the N-terminus, the 204-residue chain is Transmembrane protein 253 (204 aa).

Helical transmembrane passes span 33 to 53, 62 to 82, 96 to 116, and 138 to 158; these read LVLA…TISV, LVTA…IITL, MMIS…IEVM, and LSAE…LFLL. The segment at 184–204 is disordered; the sequence is EEVSGLENGPVVASTGNRTDE.

It is found in the membrane. This Mus musculus (Mouse) protein is Transmembrane protein 253 (Tmem253).